The following is a 660-amino-acid chain: Kinesin-like protein KIF22 (660 aa).

Positions 1 to 31 are disordered; that stretch reads MSLRAKTCPQRREMASATSGPGRCVSKGGLG. In terms of domain architecture, Kinesin motor spans 38 to 363; it reads RVRVAVRLRP…LNFTARSKEV (326 aa). 122–129 contacts ATP; the sequence is GPTGAGKT. A disordered region spans residues 391–418; sequence PSEAKKAKGPEEESTGSPESTAAPASAS. Low complexity predominate over residues 405–418; sequence TGSPESTAAPASAS. A phosphoserine mark is found at S407, S422, and S447. A Glycyl lysine isopeptide (Lys-Gly) (interchain with G-Cter in SUMO2) cross-link involves residue K460. Residues 460–505 are a coiled coil; it reads KRERMVLMKTVEEKNLEIERLKMKQKELEAKVLAQEAPDPREKENT. 2 disordered regions span residues 493–516 and 534–567; these read AQEAPDPREKENTPTILQPPASYS and IQKQRESSNQIQLLKKGPKRKLEPSPESEAVEKD. Positions 505-516 are enriched in polar residues; the sequence is TPTILQPPASYS. Phosphoserine is present on residues S540 and S576.

The protein belongs to the TRAFAC class myosin-kinesin ATPase superfamily. Kinesin family. As to quaternary structure, interacts with FAM83D and SIAH1. Post-translationally, ubiquitinated; mediated by SIAH1 and leading to its subsequent proteasomal degradation.

Its subcellular location is the nucleus. It localises to the cytoplasm. The protein localises to the cytoskeleton. Kinesin family member that is involved in spindle formation and the movements of chromosomes during mitosis and meiosis. Binds to microtubules and to DNA. Plays a role in congression of laterally attached chromosomes in NDC80-depleted cells. In Mus musculus (Mouse), this protein is Kinesin-like protein KIF22 (Kif22).